We begin with the raw amino-acid sequence, 259 residues long: Putative protein-tyrosine sulfotransferase (259 aa).

Cys-13 and Cys-68 are oxidised to a cystine. The active-site Proton donor/acceptor is the Glu-16. Residue Asn-36 is glycosylated (N-linked (GlcNAc...) asparagine). 3'-phosphoadenylyl sulfate is bound by residues Arg-95, Ser-103, and Arg-107. Asn-115 is a glycosylation site (N-linked (GlcNAc...) asparagine). The cysteines at positions 137 and 144 are disulfide-linked. Residues Tyr-149 and Ser-194 to Asn-203 each bind 3'-phosphoadenylyl sulfate.

The protein belongs to the protein sulfotransferase family.

The catalysed reaction is L-tyrosyl-[protein] + 3'-phosphoadenylyl sulfate = O-sulfo-L-tyrosine-[protein] + adenosine 3',5'-bisphosphate + H(+). Catalyzes the O-sulfation of tyrosine residues within acidic motifs of polypeptides, using 3'-phosphoadenylyl sulfate (PAPS) as cosubstrate. This Caenorhabditis elegans protein is Putative protein-tyrosine sulfotransferase (tpst-2).